A 165-amino-acid polypeptide reads, in one-letter code: MSGEGRPQASVPQAGELRLGIAAIRWHAKITDRLLERALAAASEAGVAEPTVVRVPGSIELPVVCQQLAHQHDAVVALGVVIRGGTPHFEYVCDSVTAGLTRVSLDESTPVGNGVLTCDTEEQALARAGFEDSAEDKGFEATAAALETALVLRELRGFENGRGFL.

Residues W26, S58–E60, and V80–I82 each bind 5-amino-6-(D-ribitylamino)uracil. (2S)-2-hydroxy-3-oxobutyl phosphate is bound at residue G85 to T86. The Proton donor role is filled by H88. N113 contacts 5-amino-6-(D-ribitylamino)uracil. R127 contacts (2S)-2-hydroxy-3-oxobutyl phosphate.

Belongs to the DMRL synthase family.

The enzyme catalyses (2S)-2-hydroxy-3-oxobutyl phosphate + 5-amino-6-(D-ribitylamino)uracil = 6,7-dimethyl-8-(1-D-ribityl)lumazine + phosphate + 2 H2O + H(+). It participates in cofactor biosynthesis; riboflavin biosynthesis; riboflavin from 2-hydroxy-3-oxobutyl phosphate and 5-amino-6-(D-ribitylamino)uracil: step 1/2. Its function is as follows. Catalyzes the formation of 6,7-dimethyl-8-ribityllumazine by condensation of 5-amino-6-(D-ribitylamino)uracil with 3,4-dihydroxy-2-butanone 4-phosphate. This is the penultimate step in the biosynthesis of riboflavin. The chain is 6,7-dimethyl-8-ribityllumazine synthase from Saccharopolyspora erythraea (strain ATCC 11635 / DSM 40517 / JCM 4748 / NBRC 13426 / NCIMB 8594 / NRRL 2338).